A 95-amino-acid polypeptide reads, in one-letter code: Osteocalcin-related protein (95 aa).

The signal sequence occupies residues 1–23 (MRTLSLLTLLALAALCLSDLTDA). The propeptide occupies 24-49 (TPTGPESDKAFMSKQEGNKVVNRLRR). Positions 46 to 92 (RLRRYLGASVPSPDPLEPTRELCELDPACDELSNQYGLKTAYRRIYG) constitute a Gla domain. Positions 62, 66, 69, and 75 each coordinate Ca(2+). 2 positions are modified to 4-carboxyglutamate: Glu66 and Glu69. An intrachain disulfide couples Cys68 to Cys74.

It belongs to the osteocalcin/matrix Gla protein family. In terms of processing, gamma-carboxyglutamic acid residues are formed by vitamin K dependent carboxylation. These residues are essential for the binding of calcium. As to expression, expressed in kidney and lung, but not in bone.

The protein resides in the secreted. Binds strongly to apatite and calcium. The protein is Osteocalcin-related protein of Mus musculus (Mouse).